We begin with the raw amino-acid sequence, 132 residues long: Small ribosomal subunit protein uS8 (132 aa).

This sequence belongs to the universal ribosomal protein uS8 family. As to quaternary structure, part of the 30S ribosomal subunit. Contacts proteins S5 and S12.

Functionally, one of the primary rRNA binding proteins, it binds directly to 16S rRNA central domain where it helps coordinate assembly of the platform of the 30S subunit. The sequence is that of Small ribosomal subunit protein uS8 from Brucella anthropi (strain ATCC 49188 / DSM 6882 / CCUG 24695 / JCM 21032 / LMG 3331 / NBRC 15819 / NCTC 12168 / Alc 37) (Ochrobactrum anthropi).